Here is a 382-residue protein sequence, read N- to C-terminus: Alpha-2B adrenergic receptor (382 aa).

The chain crosses the membrane as a helical span at residues 1-25 (AIAAVITFLILFTIFGNALVILAVL). Residues 26–36 (TSRSLRAPQNL) lie on the Cytoplasmic side of the membrane. Residues 37–62 (FLVSLAAADILVATLIIPFSLANELL) traverse the membrane as a helical segment. The Extracellular portion of the chain corresponds to 63 to 72 (GYWYFRHTWC). Cys72 and Cys151 are oxidised to a cystine. A helical transmembrane segment spans residues 73–95 (EVYLALDVLFCTSSIVHLCAISL). The Cytoplasmic portion of the chain corresponds to 96–117 (DRYWSVSRALEYNSKRTPRRIK). A helical transmembrane segment spans residues 118 to 140 (GIILTVWLIAAFISLPPLIYKGD). Over 141-156 (KGKKPGGRPQCKLNEE) the chain is Extracellular. A helical transmembrane segment spans residues 157–180 (AWYILSSSIGSFFAPCLIMILVYL). Residues 181–346 (RIYLIAKRRN…MNREKRFTFV (166 aa)) are Cytoplasmic-facing. The tract at residues 192-305 (QGPHGKQAPG…QGTPNFQPSQ (114 aa)) is disordered. Residues 271-284 (EEEEEEEEEEEEEC) show a composition bias toward acidic residues. Over residues 291–305 (TSSSLQGTPNFQPSQ) the composition is skewed to polar residues. A helical membrane pass occupies residues 347 to 370 (LAVVIGVFVLCWFPFFFSYSLGAI). The Extracellular portion of the chain corresponds to 371 to 379 (CPQHCKVPH). The helical transmembrane segment at 380–382 (GLF) threads the bilayer.

Belongs to the G-protein coupled receptor 1 family. Adrenergic receptor subfamily. ADRA2B sub-subfamily. Interacts with RAB26. Interacts with PPP1R9B. Interacts with GGA1, GGA2 and GGA3.

The protein localises to the cell membrane. In terms of biological role, alpha-2 adrenergic receptors mediate the catecholamine-induced inhibition of adenylate cyclase through the action of G proteins. The protein is Alpha-2B adrenergic receptor (ADRA2B) of Didelphis virginiana (North American opossum).